The primary structure comprises 65 residues: Large ribosomal subunit protein bL32 (65 aa).

The interval 1 to 45 (MAVQQNKKTPSKRGMRRAHDVLKKPTFSVDFSSGETHRRHHVTPD) is disordered.

The protein belongs to the bacterial ribosomal protein bL32 family.

The protein is Large ribosomal subunit protein bL32 of Nitrosococcus oceani (strain ATCC 19707 / BCRC 17464 / JCM 30415 / NCIMB 11848 / C-107).